A 93-amino-acid chain; its full sequence is UPF0521 protein B (93 aa).

Residues 2–58 (SLKEVITSLKNDFHSINKEIDSMKENNEKQEEKIFQEIKKLKLEMELLRKDNLSFKT) adopt a coiled-coil conformation.

Belongs to the UPF0521 family.

In Dictyostelium discoideum (Social amoeba), this protein is UPF0521 protein B.